Reading from the N-terminus, the 156-residue chain is Endoribonuclease YbeY (156 aa).

Zn(2+) is bound by residues His-117, His-121, and His-127.

This sequence belongs to the endoribonuclease YbeY family. Requires Zn(2+) as cofactor.

The protein localises to the cytoplasm. Its function is as follows. Single strand-specific metallo-endoribonuclease involved in late-stage 70S ribosome quality control and in maturation of the 3' terminus of the 16S rRNA. The protein is Endoribonuclease YbeY of Shewanella pealeana (strain ATCC 700345 / ANG-SQ1).